The following is a 178-amino-acid chain: UPF0232 protein cgR_0005 (178 aa).

The segment at 16 to 55 (AMRRNGSVPDLNKNDAFRRPPAPKGGVEKRKKGRASGLDG) is disordered.

It belongs to the UPF0232 family.

This is UPF0232 protein cgR_0005 from Corynebacterium glutamicum (strain R).